The chain runs to 561 residues: Glutamate--tRNA ligase (561 aa).

The short motif at 107–117 (PNPSGPLHLGH) is the 'HIGH' region element.

It belongs to the class-I aminoacyl-tRNA synthetase family. Glutamate--tRNA ligase type 2 subfamily.

The protein localises to the cytoplasm. It catalyses the reaction tRNA(Glu) + L-glutamate + ATP = L-glutamyl-tRNA(Glu) + AMP + diphosphate. Catalyzes the attachment of glutamate to tRNA(Glu) in a two-step reaction: glutamate is first activated by ATP to form Glu-AMP and then transferred to the acceptor end of tRNA(Glu). The sequence is that of Glutamate--tRNA ligase from Methanoculleus marisnigri (strain ATCC 35101 / DSM 1498 / JR1).